The chain runs to 340 residues: MSELDQLRQEAEQLKNQIRDARKACADATLSXITTNIDPVGRIQMRTRRTLRGHLAKIYAMHWGTDSRLLVSASQDGKLIIWDSYTTNKVHAIPLRSSWVMTCAYAPSGNYVACGGLDNICSIYNLKTREGNVRVSRELAGHTGYLSCCRFLNDNQIVTSSEDTTCALWDIETGQQTTTFTGHTGDVMSLSLAPDTRLFVSGACDASAKLWDVREGMCRQTFTGHESDINAICFFPNGNAFATGSDDATCRLFDLRADQELMTYSHDNIICGITSVSFSKSGRLLLAGYDDFNCNVWDALKADRAGVLAGHDNRVSCLGVTDDGMAVATGSWDSFLKIWN.

Position 2 is an N-acetylserine (S2). S2 carries the post-translational modification Phosphoserine. 7 WD repeats span residues R46–P94, L95–A140, G141–T181, G182–T223, G224–D267, N268–A309, and G310–N340. H266 is subject to Phosphohistidine.

This sequence belongs to the WD repeat G protein beta family. In terms of assembly, g proteins are composed of 3 units, alpha, beta and gamma. The heterodimer formed by GNB1 and GNG2 interacts with ARHGEF5. The heterodimer formed by GNB1 and GNG2 interacts with GRK2. Forms a complex with GNAO1 and GNG3. Interacts with ARHGEF18 and RASD2. Forms complexes with TAS2R14 and G-proteins; these complexes play a role in the perception of bitterness. Component of the TAS2R14-GNAI1 complex, consisting of TAS2R14, GNAI1, GNB1 and GNG2. Component of the TAS2R14-GNAT3 complex, consisting of TAS2R14, GNAT3, GNB1 and GNG2. Component of the TAS2R14-GNAS2 complex, consisting of TAS2R14, GNAS2, GNB1 and GNG2. Post-translationally, phosphorylation at His-266 by NDKB contributes to G protein activation by increasing the high energetic phosphate transfer onto GDP.

Its function is as follows. Guanine nucleotide-binding proteins (G proteins) are involved as a modulator or transducer in various transmembrane signaling systems. The beta and gamma chains are required for the GTPase activity, for replacement of GDP by GTP, and for G protein-effector interaction. In Cricetulus griseus (Chinese hamster), this protein is Guanine nucleotide-binding protein G(I)/G(S)/G(T) subunit beta-1 (GNB1).